We begin with the raw amino-acid sequence, 158 residues long: Cyclic pyranopterin monophosphate synthase (158 aa).

Substrate contacts are provided by residues 75–77 (LCH) and 113–114 (ME). The active site involves Asp-128.

The protein belongs to the MoaC family. As to quaternary structure, homohexamer; trimer of dimers.

It catalyses the reaction (8S)-3',8-cyclo-7,8-dihydroguanosine 5'-triphosphate = cyclic pyranopterin phosphate + diphosphate. Its pathway is cofactor biosynthesis; molybdopterin biosynthesis. In terms of biological role, catalyzes the conversion of (8S)-3',8-cyclo-7,8-dihydroguanosine 5'-triphosphate to cyclic pyranopterin monophosphate (cPMP). The chain is Cyclic pyranopterin monophosphate synthase from Pasteurella multocida (strain Pm70).